We begin with the raw amino-acid sequence, 328 residues long: Bcl-2/adenovirus E1B 19 kDa-interacting protein 2-like protein (328 aa).

Basic and acidic residues predominate over residues 1–22; it reads MKLGELELREEWQDEEFPRLLP. The interval 1–116 is disordered; the sequence is MKLGELELRE…DSGHEFEWED (116 aa). The segment covering 36-45 has biased composition (polar residues); that stretch reads RGSQAGTPSS. The span at 76–89 shows a compositional bias: low complexity; the sequence is ASPTRSASSSSAGS. Residues 92-105 show a composition bias toward acidic residues; it reads LEVDELETPSDSEQ. The span at 107 to 116 shows a compositional bias: basic and acidic residues; sequence DSGHEFEWED. The CRAL-TRIO domain occupies 162-323; that stretch reads DMTIIEPYKK…VVRQLDRDLH (162 aa).

In terms of assembly, homodimer. Interacts with BCL2, ARHGAP1, MIF and GFER.

Functionally, may be a bridge molecule between BCL2 and ARHGAP1/CDC42 in promoting cell death. In Mus musculus (Mouse), this protein is Bcl-2/adenovirus E1B 19 kDa-interacting protein 2-like protein (Bnipl).